The following is a 444-amino-acid chain: Methylenetetrahydrofolate--tRNA-(uracil-5-)-methyltransferase TrmFO (444 aa).

An FAD-binding site is contributed by 10–15 (GAGLAG).

The protein belongs to the MnmG family. TrmFO subfamily. FAD is required as a cofactor.

It is found in the cytoplasm. It carries out the reaction uridine(54) in tRNA + (6R)-5,10-methylene-5,6,7,8-tetrahydrofolate + NADH + H(+) = 5-methyluridine(54) in tRNA + (6S)-5,6,7,8-tetrahydrofolate + NAD(+). It catalyses the reaction uridine(54) in tRNA + (6R)-5,10-methylene-5,6,7,8-tetrahydrofolate + NADPH + H(+) = 5-methyluridine(54) in tRNA + (6S)-5,6,7,8-tetrahydrofolate + NADP(+). Functionally, catalyzes the folate-dependent formation of 5-methyl-uridine at position 54 (M-5-U54) in all tRNAs. The protein is Methylenetetrahydrofolate--tRNA-(uracil-5-)-methyltransferase TrmFO of Streptococcus pneumoniae serotype 4 (strain ATCC BAA-334 / TIGR4).